The following is a 273-amino-acid chain: Shikimate dehydrogenase (NADP(+)) (273 aa).

Residues 14–16 and threonine 61 each bind shikimate; that span reads SKS. Lysine 65 (proton acceptor) is an active-site residue. Aspartate 77 lines the NADP(+) pocket. Shikimate contacts are provided by asparagine 86 and aspartate 102. Residues 126–130, 150–155, and methionine 213 contribute to the NADP(+) site; these read GAGGA and NRTYEK. Position 215 (tyrosine 215) interacts with shikimate. Residue glycine 237 coordinates NADP(+).

Belongs to the shikimate dehydrogenase family. As to quaternary structure, homodimer.

The catalysed reaction is shikimate + NADP(+) = 3-dehydroshikimate + NADPH + H(+). It functions in the pathway metabolic intermediate biosynthesis; chorismate biosynthesis; chorismate from D-erythrose 4-phosphate and phosphoenolpyruvate: step 4/7. In terms of biological role, involved in the biosynthesis of the chorismate, which leads to the biosynthesis of aromatic amino acids. Catalyzes the reversible NADPH linked reduction of 3-dehydroshikimate (DHSA) to yield shikimate (SA). The sequence is that of Shikimate dehydrogenase (NADP(+)) from Aliivibrio salmonicida (strain LFI1238) (Vibrio salmonicida (strain LFI1238)).